We begin with the raw amino-acid sequence, 156 residues long: 6,7-dimethyl-8-ribityllumazine synthase (156 aa).

5-amino-6-(D-ribitylamino)uracil is bound by residues F23, 57-59, and 81-83; these read AYE and AII. 86–87 is a binding site for (2S)-2-hydroxy-3-oxobutyl phosphate; that stretch reads ST. H89 acts as the Proton donor in catalysis. F114 is a 5-amino-6-(D-ribitylamino)uracil binding site. (2S)-2-hydroxy-3-oxobutyl phosphate is bound at residue R128.

This sequence belongs to the DMRL synthase family.

It carries out the reaction (2S)-2-hydroxy-3-oxobutyl phosphate + 5-amino-6-(D-ribitylamino)uracil = 6,7-dimethyl-8-(1-D-ribityl)lumazine + phosphate + 2 H2O + H(+). Its pathway is cofactor biosynthesis; riboflavin biosynthesis; riboflavin from 2-hydroxy-3-oxobutyl phosphate and 5-amino-6-(D-ribitylamino)uracil: step 1/2. Its function is as follows. Catalyzes the formation of 6,7-dimethyl-8-ribityllumazine by condensation of 5-amino-6-(D-ribitylamino)uracil with 3,4-dihydroxy-2-butanone 4-phosphate. This is the penultimate step in the biosynthesis of riboflavin. This chain is 6,7-dimethyl-8-ribityllumazine synthase, found in Campylobacter hominis (strain ATCC BAA-381 / DSM 21671 / CCUG 45161 / LMG 19568 / NCTC 13146 / CH001A).